A 313-amino-acid chain; its full sequence is tRNA-cytidine(32) 2-sulfurtransferase (313 aa).

Positions 54-59 (SGGKDS) match the PP-loop motif motif. 3 residues coordinate [4Fe-4S] cluster: cysteine 129, cysteine 132, and cysteine 220.

The protein belongs to the TtcA family. Homodimer. It depends on Mg(2+) as a cofactor. Requires [4Fe-4S] cluster as cofactor.

Its subcellular location is the cytoplasm. It catalyses the reaction cytidine(32) in tRNA + S-sulfanyl-L-cysteinyl-[cysteine desulfurase] + AH2 + ATP = 2-thiocytidine(32) in tRNA + L-cysteinyl-[cysteine desulfurase] + A + AMP + diphosphate + H(+). Its pathway is tRNA modification. Catalyzes the ATP-dependent 2-thiolation of cytidine in position 32 of tRNA, to form 2-thiocytidine (s(2)C32). The sulfur atoms are provided by the cysteine/cysteine desulfurase (IscS) system. This is tRNA-cytidine(32) 2-sulfurtransferase from Methylibium petroleiphilum (strain ATCC BAA-1232 / LMG 22953 / PM1).